The primary structure comprises 1044 residues: Carbamoyl phosphate synthase large chain (1044 aa).

A carboxyphosphate synthetic domain region spans residues 1–398; sequence MPKREDISKI…ALMKAIASLD (398 aa). ATP is bound by residues Arg-129, Arg-169, Gly-175, Gly-176, Arg-208, Leu-210, Glu-215, Gly-241, Val-242, His-243, Gln-284, and Glu-296. The ATP-grasp 1 domain maps to 133-325; that stretch reads HDFLISIGER…IARIAAKIAV (193 aa). Residues Gln-284, Glu-296, and Asn-298 each contribute to the Mg(2+) site. Positions 284, 296, and 298 each coordinate Mn(2+). The tract at residues 399–539 is oligomerization domain; the sequence is IDLSYRLRLY…YSTYEDEDEL (141 aa). Residues 540–916 are carbamoyl phosphate synthetic domain; that stretch reads PGISGFVAII…AIRKSILRDI (377 aa). One can recognise an ATP-grasp 2 domain in the interval 665–854; the sequence is SKRLEAMGID…WVELAVSAIM (190 aa). Residues Arg-701, Lys-738, Leu-740, Glu-745, Gly-770, Val-771, His-772, Ser-773, Gln-813, and Glu-825 each contribute to the ATP site. Mg(2+) is bound by residues Gln-813, Glu-825, and Asn-827. Residues Gln-813, Glu-825, and Asn-827 each coordinate Mn(2+). One can recognise an MGS-like domain in the interval 911 to 1044; that stretch reads SILRDIKSVF…IDYREISSYH (134 aa). The segment at 916-1044 is allosteric domain; sequence IKSVFISVRD…IDYREISSYH (129 aa).

It belongs to the CarB family. In terms of assembly, composed of two chains; the small (or glutamine) chain promotes the hydrolysis of glutamine to ammonia, which is used by the large (or ammonia) chain to synthesize carbamoyl phosphate. Tetramer of heterodimers (alpha,beta)4. It depends on Mg(2+) as a cofactor. Requires Mn(2+) as cofactor.

The catalysed reaction is hydrogencarbonate + L-glutamine + 2 ATP + H2O = carbamoyl phosphate + L-glutamate + 2 ADP + phosphate + 2 H(+). The enzyme catalyses hydrogencarbonate + NH4(+) + 2 ATP = carbamoyl phosphate + 2 ADP + phosphate + 2 H(+). Its pathway is amino-acid biosynthesis; L-arginine biosynthesis; carbamoyl phosphate from bicarbonate: step 1/1. It participates in pyrimidine metabolism; UMP biosynthesis via de novo pathway; (S)-dihydroorotate from bicarbonate: step 1/3. Large subunit of the glutamine-dependent carbamoyl phosphate synthetase (CPSase). CPSase catalyzes the formation of carbamoyl phosphate from the ammonia moiety of glutamine, carbonate, and phosphate donated by ATP, constituting the first step of 2 biosynthetic pathways, one leading to arginine and/or urea and the other to pyrimidine nucleotides. The large subunit (synthetase) binds the substrates ammonia (free or transferred from glutamine from the small subunit), hydrogencarbonate and ATP and carries out an ATP-coupled ligase reaction, activating hydrogencarbonate by forming carboxy phosphate which reacts with ammonia to form carbamoyl phosphate. The polypeptide is Carbamoyl phosphate synthase large chain (Thermoplasma volcanium (strain ATCC 51530 / DSM 4299 / JCM 9571 / NBRC 15438 / GSS1)).